A 260-amino-acid chain; its full sequence is Chloride intracellular channel Clic (260 aa).

Residues 42–66 (FCQEYFMDLYLLAELKTISLKVTTV) form a helical membrane-spanning segment.

The protein belongs to the chloride channel CLIC family. In terms of tissue distribution, expressed in cardiac tubes.

It is found in the mitochondrion. The protein resides in the membrane. In terms of biological role, might insert into membranes and form chloride ion channels. Channel activity depends on the pH. May play a role in ethanol sensitivity. The polypeptide is Chloride intracellular channel Clic (Drosophila melanogaster (Fruit fly)).